The primary structure comprises 690 residues: Elongation factor G (690 aa).

A tr-type G domain is found at 8 to 283; it reads SRCRNIGIMA…AVVDFLPSPS (276 aa). Residues 17–24, 81–85, and 135–138 each bind GTP; these read AHIDAGKT, DTPGH, and NKMD.

Belongs to the TRAFAC class translation factor GTPase superfamily. Classic translation factor GTPase family. EF-G/EF-2 subfamily.

It localises to the cytoplasm. Catalyzes the GTP-dependent ribosomal translocation step during translation elongation. During this step, the ribosome changes from the pre-translocational (PRE) to the post-translocational (POST) state as the newly formed A-site-bound peptidyl-tRNA and P-site-bound deacylated tRNA move to the P and E sites, respectively. Catalyzes the coordinated movement of the two tRNA molecules, the mRNA and conformational changes in the ribosome. The sequence is that of Elongation factor G from Anaplasma marginale (strain Florida).